An 87-amino-acid chain; its full sequence is Small ribosomal subunit protein uS15 (87 aa).

Belongs to the universal ribosomal protein uS15 family. As to quaternary structure, part of the 30S ribosomal subunit. Forms a bridge to the 50S subunit in the 70S ribosome, contacting the 23S rRNA.

In terms of biological role, one of the primary rRNA binding proteins, it binds directly to 16S rRNA where it helps nucleate assembly of the platform of the 30S subunit by binding and bridging several RNA helices of the 16S rRNA. Forms an intersubunit bridge (bridge B4) with the 23S rRNA of the 50S subunit in the ribosome. This Cutibacterium acnes (strain DSM 16379 / KPA171202) (Propionibacterium acnes) protein is Small ribosomal subunit protein uS15.